The following is a 238-amino-acid chain: Probable transcriptional regulatory protein SpyM51586 (238 aa).

Belongs to the TACO1 family. YeeN subfamily.

It localises to the cytoplasm. The chain is Probable transcriptional regulatory protein SpyM51586 from Streptococcus pyogenes serotype M5 (strain Manfredo).